The primary structure comprises 572 residues: Squalene monooxygenase (572 aa).

Over 1-19 (MWTFLGIATFTYFYKKCGD) the chain is Cytoplasmic. Residues 1–98 (MWTFLGIATF…EQLESKKCRK (98 aa)) are interaction with MARCHF6. The stretch at 20 to 40 (VTLANKELLLCVLVFLSLGLV) is an intramembrane region. The Cytoplasmic segment spans residues 41-572 (LSYRCRHRHG…IYSEMKYLVH (532 aa)). Residues 61-72 (QFAAFSDILSAL) are required for degradation in response to high membrane cholesterol levels. The segment at 116-572 (TSFVTDPEVI…IYSEMKYLVH (457 aa)) is sufficient for enzyme activity. FAD-binding positions include 131–132 (VL), 151–152 (ER), R159, R232, V248, D406, and M419. The hydrophobic; mediates interaction with membranes stretch occupies residues 514–572 (PLVLIRHFFSVAIYATYFCFKSEPWATKPRALFSSGAVLYKACSILFPLIYSEMKYLVH).

Belongs to the squalene monooxygenase family. In terms of assembly, interacts (via N-terminal domain) with MARCHF6. Interacts with SMIM22; this interaction modulates lipid droplet formation. FAD is required as a cofactor. Ubiquitinated by MARCHF6 in response to high cholesterol levels in intracellular membranes, leading to proteasomal degradation. As to expression, detected in liver.

The protein resides in the microsome membrane. The protein localises to the endoplasmic reticulum membrane. The enzyme catalyses squalene + reduced [NADPH--hemoprotein reductase] + O2 = (S)-2,3-epoxysqualene + oxidized [NADPH--hemoprotein reductase] + H2O + H(+). It participates in terpene metabolism; lanosterol biosynthesis; lanosterol from farnesyl diphosphate: step 2/3. Functionally, catalyzes the stereospecific oxidation of squalene to (S)-2,3-epoxysqualene, and is considered to be a rate-limiting enzyme in steroid biosynthesis. The polypeptide is Squalene monooxygenase (Sqle) (Mus musculus (Mouse)).